A 228-amino-acid polypeptide reads, in one-letter code: L-ribulose-5-phosphate 4-epimerase UlaF (228 aa).

Substrate-binding positions include 26–27, 43–44, and 72–73; these read GN, SG, and SS. Asp74, His93, and His95 together coordinate Zn(2+). Asp118 functions as the Proton donor/acceptor in the catalytic mechanism. His167 serves as a coordination point for Zn(2+). The active-site Proton donor/acceptor is Tyr225.

It belongs to the aldolase class II family. AraD/FucA subfamily. It depends on Zn(2+) as a cofactor.

It carries out the reaction L-ribulose 5-phosphate = D-xylulose 5-phosphate. Its pathway is cofactor degradation; L-ascorbate degradation; D-xylulose 5-phosphate from L-ascorbate: step 4/4. In terms of biological role, catalyzes the isomerization of L-ribulose 5-phosphate to D-xylulose 5-phosphate. Is involved in the anaerobic L-ascorbate utilization. This chain is L-ribulose-5-phosphate 4-epimerase UlaF, found in Salmonella choleraesuis (strain SC-B67).